The primary structure comprises 830 residues: Histone acetyltransferase KAT2A (830 aa).

A disordered region spans residues 1 to 94; the sequence is MAEPSQAPNP…RKAQVRGLPR (94 aa). N-acetylalanine is present on alanine 2. Pro residues-rich tracts occupy residues 7–33 and 41–51; these read APNP…PAPS and APTPAPAPAPA. Over residues 58–69 the composition is skewed to gly residues; that stretch reads TGSGGAGVGSGG. The segment covering 83 to 94 has biased composition (basic residues); that stretch reads SQRKAQVRGLPR. A Phosphoserine modification is found at serine 302. Residues 398–417 show a composition bias toward low complexity; the sequence is SFSPSMGGGSNSSLSLDSAG. The interval 398–426 is disordered; that stretch reads SFSPSMGGGSNSSLSLDSAGTEPMPAGEK. The N-acetyltransferase domain occupies 496–649; it reads VIGNSLTPKA…GATLMECELN (154 aa). Lysine 542 is subject to N6-acetyllysine. Catalysis depends on glutamate 568, which acts as the Proton donor/acceptor. Acetyl-CoA contacts are provided by residues 572–574, 579–585, and tyrosine 610; these read CAV and QVKGYGT. Succinyl-CoA contacts are provided by residues 572-574, 579-585, and tyrosine 610; these read CAV and QVKGYGT. Lysine 721 participates in a covalent cross-link: Glycyl lysine isopeptide (Lys-Gly) (interchain with G-Cter in SUMO2). Residues 721–825 form the Bromo domain; that stretch reads KDPDQLYTTL…KFFYFKLKEG (105 aa). Threonine 728 carries the post-translational modification Phosphothreonine. Residues lysine 752 and lysine 784 each participate in a glycyl lysine isopeptide (Lys-Gly) (interchain with G-Cter in SUMO2) cross-link.

It belongs to the acetyltransferase family. GCN5 subfamily. In terms of assembly, interacts with EP300, CREBBP and ADA2. Component of the TFTC-HAT complex, at least composed of TAF5L, TAF6L, TAF3, TADA3L, SUPT3H/SPT3, TAF2/TAFII150, TAF4/TAFII135, TAF5/TAFII100, KAT2A/GCN5L2, TAF10 and TRRAP. Component of the STAGA transcription coactivator-HAT complex, at least composed of SUPT3H, KAT2A, SUPT7L, TAF5L, TAF6L, TADA3L, TAD1L, TAF10, TAF12, TRRAP and TAF9. The STAGA core complex is associated with a subcomplex required for histone deubiquitination composed of ATXN7L3, ENY2 and USP22. Component of the ADA2A-containing complex (ATAC), composed of KAT14, KAT2A, TADA2L, TADA3L, ZZ3, MBIP, WDR5, YEATS2, CCDC101 and DR1. In the complex, it probably interacts directly with KAT14, MBIP and WDR5. Interacts with PML. Interacts with CEBPB. Interacts with TACC1, TACC2 and TACC3. Interacts with RELA. Interacts with NFATC2. Interacts with TBX5. Interacts with PLK4. Associates with the 2-oxoglutarate dehydrogenase complex. Interacts with XPC; leading to KAT2A recruitment to promoters and subsequent acetylation of histones. Interacts with ERCC3/XPB; leading to KAT2A recruitment to promoters and subsequent acetylation of histones. Interacts with ISL1. Interactions of ISL1 with MLIP1 or KAT2A may be mutually exclusive. Post-translationally, acetylated at Lys-542, inhibiting the protein acetyltransferase activity. Deacetylation at Lys-542 by SIRT6 promotes phosphorylation at Ser-302 and Thr-728 and subsequent activation of the protein acetyltransferase activity, leading to acetylation and inactivation of PPARGC1A. As to expression, in brain, highly expressed in the hippocampal CA1 region (at protein level). Also expressed in the hippocampal subregions CA3 and the dentate gyrus as well as in the cortex and prefrontal cortex. Expressed at low level in the cerebellum.

It localises to the nucleus. Its subcellular location is the chromosome. The protein localises to the cytoplasm. The protein resides in the cytoskeleton. It is found in the microtubule organizing center. It localises to the centrosome. The catalysed reaction is L-lysyl-[histone] + acetyl-CoA = N(6)-acetyl-L-lysyl-[histone] + CoA + H(+). It catalyses the reaction L-lysyl-[protein] + acetyl-CoA = N(6)-acetyl-L-lysyl-[protein] + CoA + H(+). The enzyme catalyses succinyl-CoA + L-lysyl-[protein] = N(6)-succinyl-L-lysyl-[protein] + CoA + H(+). It carries out the reaction glutaryl-CoA + L-lysyl-[protein] = N(6)-glutaryl-L-lysyl-[protein] + CoA + H(+). Functionally, protein lysine acyltransferase that can act as a acetyltransferase, glutaryltransferase, succinyltransferase or malonyltransferase, depending on the context. Acts as a histone lysine succinyltransferase: catalyzes succinylation of histone H3 on 'Lys-79' (H3K79succ), with a maximum frequency around the transcription start sites of genes. Succinylation of histones gives a specific tag for epigenetic transcription activation. Association with the 2-oxoglutarate dehydrogenase complex, which provides succinyl-CoA, is required for histone succinylation. In different complexes, functions either as an acetyltransferase (HAT) or as a succinyltransferase: in the SAGA and ATAC complexes, acts as a histone acetyltransferase. Has significant histone acetyltransferase activity with core histones, but not with nucleosome core particles. Has a a strong preference for acetylation of H3 at 'Lys-9' (H3K9ac). Acetylation of histones gives a specific tag for epigenetic transcription activation. Recruited by the XPC complex at promoters, where it specifically mediates acetylation of histone variant H2A.Z.1/H2A.Z, thereby promoting expression of target genes. Involved in long-term memory consolidation and synaptic plasticity: acts by promoting expression of a hippocampal gene expression network linked to neuroactive receptor signaling. Acts as a positive regulator of T-cell activation: upon TCR stimulation, recruited to the IL2 promoter following interaction with NFATC2 and catalyzes acetylation of histone H3 at 'Lys-9' (H3K9ac), leading to promote IL2 expression. Required for growth and differentiation of craniofacial cartilage and bone by regulating acetylation of histone H3 at 'Lys-9' (H3K9ac). Regulates embryonic stem cell (ESC) pluripotency and differentiation. Also acetylates non-histone proteins, such as CEBPB, MRE11, PPARGC1A, PLK4 and TBX5. Involved in heart and limb development by mediating acetylation of TBX5, acetylation regulating nucleocytoplasmic shuttling of TBX5. Acts as a negative regulator of centrosome amplification by mediating acetylation of PLK4. Acts as a negative regulator of gluconeogenesis by mediating acetylation and subsequent inactivation of PPARGC1A. Also acts as a histone glutaryltransferase: catalyzes glutarylation of histone H4 on 'Lys-91' (H4K91glu), a mark that destabilizes nucleosomes by promoting dissociation of the H2A-H2B dimers from nucleosomes. The sequence is that of Histone acetyltransferase KAT2A from Mus musculus (Mouse).